The primary structure comprises 412 residues: Transcription factor NIGT1 (412 aa).

Disordered stretches follow at residues 54 to 241 (MDAA…RCWA), 286 to 310 (KYRL…PAPP), and 358 to 412 (AMLP…TTSA). The span at 90–112 (ESTHADAAKSGKKEEAETSERHS) shows a compositional bias: basic and acidic residues. The segment covering 183–193 (ASSTTAAASST) has biased composition (low complexity). Basic and acidic residues predominate over residues 198 to 228 (SGDKPTDDDTEKHMETDKDNDKDAKDKDKEG). The region spanning 232 to 292 (PHRKPRRCWA…HLQKYRLHTR (61 aa)) is the HTH myb-type domain. The H-T-H motif DNA-binding region spans 263–288 (PKQIRELMKVDGLTNDEVKSHLQKYR). Basic and acidic residues predominate over residues 383-392 (SGSEGRRSGD). Residues 395-412 (DGSSSSPAVSSSSQTTSA) are compositionally biased toward low complexity.

It localises to the nucleus. Transcriptional repressor that may play a role in response to nitrogen. May be involved in a time-dependent signaling for transcriptional regulation of nitrate-responsive genes. Binds specifically to the DNA sequence motif 5'-GAATC-3' or 5'-GAATATTC-3'. Represses the activity of its own promoter trough binding to these motifs. This is Transcription factor NIGT1 from Oryza sativa subsp. japonica (Rice).